The following is a 589-amino-acid chain: Aspartate--tRNA(Asp/Asn) ligase (589 aa).

Residue E170 coordinates L-aspartate. The segment at 194–197 is aspartate; the sequence is QLFK. Residue R216 coordinates L-aspartate. ATP contacts are provided by residues 216–218 and Q225; that span reads RDE. Residue H448 participates in L-aspartate binding. E482 is an ATP binding site. R489 is a binding site for L-aspartate. 534–537 lines the ATP pocket; that stretch reads GWDR. A disordered region spans residues 563–589; that stretch reads PLTDAPASITAQQRKESGIDTKPKEVE. Positions 575-589 are enriched in basic and acidic residues; sequence QRKESGIDTKPKEVE.

It belongs to the class-II aminoacyl-tRNA synthetase family. Type 1 subfamily. Homodimer.

It is found in the cytoplasm. It catalyses the reaction tRNA(Asx) + L-aspartate + ATP = L-aspartyl-tRNA(Asx) + AMP + diphosphate. Aspartyl-tRNA synthetase with relaxed tRNA specificity since it is able to aspartylate not only its cognate tRNA(Asp) but also tRNA(Asn). Reaction proceeds in two steps: L-aspartate is first activated by ATP to form Asp-AMP and then transferred to the acceptor end of tRNA(Asp/Asn). In Mycobacterium leprae (strain Br4923), this protein is Aspartate--tRNA(Asp/Asn) ligase.